Here is a 163-residue protein sequence, read N- to C-terminus: Transcriptional repressor NrdR (163 aa).

Positions 1-22 are disordered; it reads MRCPKCQSLKSSVIDSRQAEDG. A zinc finger lies at 3-34; the sequence is CPKCQSLKSSVIDSRQAEDGNTIRRRRSCDQC. An ATP-cone domain is found at 49–139; the sequence is LVVVKKDGTR…VYRSFKDVGE (91 aa).

It belongs to the NrdR family. The cofactor is Zn(2+).

Negatively regulates transcription of bacterial ribonucleotide reductase nrd genes and operons by binding to NrdR-boxes. This is Transcriptional repressor NrdR from Streptococcus suis (strain 98HAH33).